The sequence spans 259 residues: MGAGNFLTALEVPVAALAGAASDRRASCERVSPPPPLPHFRLPPLPRSRLPGPVSRPEPGAPLLGCWLQWGAPSPGPLCLLFRLCSCTCFAPLPAGADMDPNPRAALERQQLRLRERQKFFEDILQPETEFVFPLSHLHLESQRPPIGSISSMEVNVDTLEQVELIDLGDPDAADVFLPCEDPPPTPQSSGMDNHLEELSLPVPTSDRTTSRTSSSSSSDSSTNLHSPNPSDDGADTPLAQSDEEEERGDGGAEPGACS.

2 disordered regions span residues 27-56 and 174-259; these read SCER…PVSR and ADVF…GACS. Residues 32–46 show a composition bias toward pro residues; that stretch reads SPPPPLPHFRLPPLP. Low complexity predominate over residues 205 to 223; the sequence is TSDRTTSRTSSSSSSDSST. 2 positions are modified to phosphoserine: serine 217 and serine 218. Threonine 237 is subject to Phosphothreonine. Serine 242 carries the post-translational modification Phosphoserine.

This sequence belongs to the dysbindin family. Monomer. Interacts with CSNK1D and CSNK1E. As to expression, detected in brain.

May modulate the activity of casein kinase-1. Inhibits CSNK1D autophosphorylation (in vitro). The sequence is that of Dysbindin domain-containing protein 2 (DBNDD2) from Homo sapiens (Human).